Here is a 228-residue protein sequence, read N- to C-terminus: Orotidine 5'-phosphate decarboxylase (228 aa).

Residues Asp20, Lys42, Asp70 to Thr79, Ser127, Pro180 to Gly190, Gly202, and Arg203 contribute to the substrate site. Lys72 (proton donor) is an active-site residue.

This sequence belongs to the OMP decarboxylase family. Type 1 subfamily. Homodimer.

The enzyme catalyses orotidine 5'-phosphate + H(+) = UMP + CO2. Its pathway is pyrimidine metabolism; UMP biosynthesis via de novo pathway; UMP from orotate: step 2/2. Functionally, catalyzes the decarboxylation of orotidine 5'-monophosphate (OMP) to uridine 5'-monophosphate (UMP). This Methanothermobacter thermautotrophicus (strain ATCC 29096 / DSM 1053 / JCM 10044 / NBRC 100330 / Delta H) (Methanobacterium thermoautotrophicum) protein is Orotidine 5'-phosphate decarboxylase (pyrF).